The chain runs to 784 residues: Homoaconitase, mitochondrial (784 aa).

A mitochondrion-targeting transit peptide spans methionine 1–serine 32. [4Fe-4S] cluster is bound by residues cysteine 399, cysteine 468, and cysteine 471. Residues glutamate 572–threonine 596 form a disordered region. The segment covering glutamate 578–serine 589 has biased composition (low complexity).

Belongs to the aconitase/IPM isomerase family. Requires [4Fe-4S] cluster as cofactor.

The protein localises to the mitochondrion. The enzyme catalyses (2R,3S)-homoisocitrate = cis-homoaconitate + H2O. The protein operates within amino-acid biosynthesis; L-lysine biosynthesis via AAA pathway; L-alpha-aminoadipate from 2-oxoglutarate: step 3/5. In terms of biological role, catalyzes the reversible hydration of cis-homoaconitate to (2R,3S)-homoisocitrate, a step in the alpha-aminoadipate pathway for lysine biosynthesis. This Neurospora crassa (strain ATCC 24698 / 74-OR23-1A / CBS 708.71 / DSM 1257 / FGSC 987) protein is Homoaconitase, mitochondrial (lys-4).